The chain runs to 300 residues: Neutral protease NprE (300 aa).

Ca(2+) is bound at residue aspartate 139. Histidine 143 is a Zn(2+) binding site. Glutamate 144 is an active-site residue. Zn(2+)-binding residues include histidine 147 and glutamate 167. Positions 178, 181, 183, and 186 each coordinate Ca(2+). The active-site Proton donor is histidine 228.

This sequence belongs to the peptidase M4 family. The cofactor is Ca(2+). Requires Zn(2+) as cofactor.

It is found in the secreted. It catalyses the reaction Similar, but not identical, to that of thermolysin.. Extracellular zinc metalloprotease. This Bacillus pumilus (Bacillus mesentericus) protein is Neutral protease NprE (nprE).